Here is a 352-residue protein sequence, read N- to C-terminus: Chorismate synthase (352 aa).

Residues R48 and R54 each coordinate NADP(+). FMN-binding positions include 125 to 127 (RSS), 238 to 239 (NA), G278, 293 to 297 (KPTSS), and R319.

The protein belongs to the chorismate synthase family. Homotetramer. FMNH2 is required as a cofactor.

The catalysed reaction is 5-O-(1-carboxyvinyl)-3-phosphoshikimate = chorismate + phosphate. It functions in the pathway metabolic intermediate biosynthesis; chorismate biosynthesis; chorismate from D-erythrose 4-phosphate and phosphoenolpyruvate: step 7/7. Its function is as follows. Catalyzes the anti-1,4-elimination of the C-3 phosphate and the C-6 proR hydrogen from 5-enolpyruvylshikimate-3-phosphate (EPSP) to yield chorismate, which is the branch point compound that serves as the starting substrate for the three terminal pathways of aromatic amino acid biosynthesis. This reaction introduces a second double bond into the aromatic ring system. The protein is Chorismate synthase of Bordetella avium (strain 197N).